The primary structure comprises 163 residues: uncharacterized protein (163 aa).

The segment at 30–163 (GNENTSVSSD…IYKKLGKKKR (134 aa)) is disordered. Over residues 88–118 (ERQLQKKKEAEKIEGGKNHDNLKRKLNKVGD) the composition is skewed to basic and acidic residues. The segment covering 119–133 (ELNEQQSDTDDDDDD) has biased composition (acidic residues). S125 carries the phosphoserine modification. T127 is subject to Phosphothreonine.

Its subcellular location is the nucleus. The protein resides in the nucleolus. This is an uncharacterized protein from Schizosaccharomyces pombe (strain 972 / ATCC 24843) (Fission yeast).